Here is a 38-residue protein sequence, read N- to C-terminus: Large ribosomal subunit protein bL36 (38 aa).

The protein belongs to the bacterial ribosomal protein bL36 family.

The polypeptide is Large ribosomal subunit protein bL36 (Polynucleobacter necessarius subsp. necessarius (strain STIR1)).